A 286-amino-acid polypeptide reads, in one-letter code: E3 SUMO-protein ligase K-bZIP (286 aa).

Disordered regions lie at residues 1 to 22 and 106 to 130; these read MPRMKDIPTKSSPGTDNSEKDE and WTLSHTPPRGPHISQQLPTRRSKRR.

Interacts with host HDAC1 and HDAC2, these interactions suppress HDAC activities. Interacts with protein ORF57. Interacts with protein vPK. Post-translationally, sumoylated.

It participates in protein modification; protein sumoylation. Functionally, SUMO E3 ligase that plays a role in viral gene regulation and is essential for viral reactivation. Disrupts host G1 cell cycle control thus allowing viral transcription and translation to proceed at the early stages of infection. Catalyzes its own SUMO modification as well as that of its interacting partners such as host TP53 and RB1. Regulates viral gene expression and reactivation and may mediate the SUMOylation of viral promoters in the low methylated 'Lys-9' histone H3 (H3K9me) region which results in a diminution of viral gene expression after reactivation. SUMOylates also host histone lysine demethylase 4A/KDM4A, an essential step for complete enrichment of SUMO-2/3 on the viral genome during viral transactivation and reactivation. This chain is E3 SUMO-protein ligase K-bZIP (K8), found in Human herpesvirus 8 type P (isolate GK18) (HHV-8).